We begin with the raw amino-acid sequence, 366 residues long: Ferredoxin--NADP reductase (366 aa).

7 residues coordinate FAD: Asp-51, Gln-59, Tyr-64, Val-104, Phe-139, Asp-308, and Thr-349.

Belongs to the ferredoxin--NADP reductase type 2 family. In terms of assembly, homodimer. The cofactor is FAD.

The enzyme catalyses 2 reduced [2Fe-2S]-[ferredoxin] + NADP(+) + H(+) = 2 oxidized [2Fe-2S]-[ferredoxin] + NADPH. In Methylibium petroleiphilum (strain ATCC BAA-1232 / LMG 22953 / PM1), this protein is Ferredoxin--NADP reductase.